A 501-amino-acid chain; its full sequence is Dipeptide and tripeptide permease B (501 aa).

Residues 1–27 (MRPSAPTGLLQQPKPFFMIFFVELWER) lie on the Cytoplasmic side of the membrane. The helical transmembrane segment at 28-48 (FGYYGVQGILAVFFVQQLGFS) threads the bilayer. Topologically, residues 49 to 52 (QEQS) are periplasmic. The chain crosses the membrane as a helical span at residues 53–73 (FITFGAFSALVYGLISVGGYV). At 74 to 82 (GDHVLGTKR) the chain is on the cytoplasmic side. Residues 83-103 (TMVLGAIVLVIGYFMTGMSIY) form a helical membrane-spanning segment. Over 104–106 (NPD) the chain is Periplasmic. The chain crosses the membrane as a helical span at residues 107–127 (LIFYALGTIAVGNCLFKANPA). At 128 to 146 (SLLAKCYERGDPRLDGAFT) the chain is on the cytoplasmic side. Residues 147-167 (LFYMSINIGSLISLSLAPVIA) form a helical membrane-spanning segment. The Periplasmic segment spans residues 168 to 172 (DHYGY). Residues 173–193 (TVTYNLCGVGLVIALLTFFAC) traverse the membrane as a helical segment. The Cytoplasmic portion of the chain corresponds to 194–211 (RHMVRDIGSEPDHLPLDY). The chain crosses the membrane as a helical span at residues 212–232 (GKLLLVLLGSVALVFFCAWLM). Histidine 233 is a topological domain (periplasmic). Residues 234-254 (HVVIANMVLMTVTLAVVIFFF) traverse the membrane as a helical segment. Residues 255-267 (REAFKLDAVARNK) lie on the Cytoplasmic side of the membrane. A helical membrane pass occupies residues 268-288 (MYVAFVLMLEAVVFYVLYAQM). The Periplasmic segment spans residues 289 to 311 (PTSLNFFAINNMHHEMLGMSVNP). The helical transmembrane segment at 312-332 (ISFQALNPFWVVVGSPVLAMI) threads the bilayer. Residues 333-350 (YTRLGSKGRDLTMPLKFT) lie on the Cytoplasmic side of the membrane. Residues 351–371 (LGMLFCSLGFLTAAASGIWFA) form a helical membrane-spanning segment. At 372–380 (DAQGLTSPW) the chain is on the periplasmic side. A helical membrane pass occupies residues 381 to 401 (FMVLIYLFQSLGELMISALGL). At 402 to 411 (AMVAALVPQR) the chain is on the cytoplasmic side. The chain crosses the membrane as a helical span at residues 412–432 (LMGFILGMWFLTQAMASLLGG). The Periplasmic portion of the chain corresponds to 433–456 (YVATFTAVPQGVTDPLQTLPIYTD). The chain crosses the membrane as a helical span at residues 457–477 (VFGKIGLVTLLVAVVMALMVP). The Cytoplasmic segment spans residues 478-501 (WLNRMMHAGQGEEGEDLLSQQAKA).

The protein belongs to the major facilitator superfamily. Proton-dependent oligopeptide transporter (POT/PTR) (TC 2.A.17) family. DtpB subfamily.

The protein resides in the cell inner membrane. Its function is as follows. Proton-dependent permease that transports di- and tripeptides. This Aeromonas hydrophila subsp. hydrophila (strain ATCC 7966 / DSM 30187 / BCRC 13018 / CCUG 14551 / JCM 1027 / KCTC 2358 / NCIMB 9240 / NCTC 8049) protein is Dipeptide and tripeptide permease B.